The primary structure comprises 71 residues: Large ribosomal subunit protein bL32c (71 aa).

Residues 1-24 form a disordered region; sequence MAVPKKRTSRSKKKIRKNVRKGKK.

The protein belongs to the bacterial ribosomal protein bL32 family.

Its subcellular location is the plastid. The protein resides in the chloroplast. This chain is Large ribosomal subunit protein bL32c, found in Pinus koraiensis (Korean pine).